A 202-amino-acid chain; its full sequence is Glycerol-3-phosphate acyltransferase (202 aa).

6 helical membrane passes run 3-23 (NLII…LILA), 61-81 (IATI…LKFL), 87-107 (LLWS…YLLF), 118-138 (GAMI…WVVI), 144-164 (ISSL…FIFN), and 167-187 (LEIH…YKHL).

It belongs to the PlsY family. In terms of assembly, probably interacts with PlsX.

It localises to the cell inner membrane. It catalyses the reaction an acyl phosphate + sn-glycerol 3-phosphate = a 1-acyl-sn-glycero-3-phosphate + phosphate. It functions in the pathway lipid metabolism; phospholipid metabolism. Its function is as follows. Catalyzes the transfer of an acyl group from acyl-phosphate (acyl-PO(4)) to glycerol-3-phosphate (G3P) to form lysophosphatidic acid (LPA). This enzyme utilizes acyl-phosphate as fatty acyl donor, but not acyl-CoA or acyl-ACP. This Campylobacter jejuni subsp. jejuni serotype O:6 (strain 81116 / NCTC 11828) protein is Glycerol-3-phosphate acyltransferase.